The following is a 246-amino-acid chain: UPF0309 protein TTE0306 (246 aa).

Positions 31 to 212 constitute an SIS domain; it reads ITESLISEDS…EAEIITNMLE (182 aa).

This sequence belongs to the UPF0309 family.

The polypeptide is UPF0309 protein TTE0306 (Caldanaerobacter subterraneus subsp. tengcongensis (strain DSM 15242 / JCM 11007 / NBRC 100824 / MB4) (Thermoanaerobacter tengcongensis)).